Here is a 150-residue protein sequence, read N- to C-terminus: MRCVVYSIAKSSPLELVKIYQKQCKQFDCELELVDLFPKNTANAQKVSKELAQKSYSLAFEPYLNPKAKNIALHPKAQRGDSFAFSKMLENHLNINFFIAGAYGFEENFLKDCQAWSLSEMTFSHEVAKIVLCEQIYRALSIIFKHPYHK.

Residues A100 and 118–123 (LSEMTF) each bind S-adenosyl-L-methionine.

Belongs to the RNA methyltransferase RlmH family. Homodimer.

Its subcellular location is the cytoplasm. It carries out the reaction pseudouridine(1915) in 23S rRNA + S-adenosyl-L-methionine = N(3)-methylpseudouridine(1915) in 23S rRNA + S-adenosyl-L-homocysteine + H(+). Specifically methylates the pseudouridine at position 1915 (m3Psi1915) in 23S rRNA. In Helicobacter pylori (strain Shi470), this protein is Ribosomal RNA large subunit methyltransferase H.